The sequence spans 343 residues: Anthranilate phosphoribosyltransferase (343 aa).

5-phospho-alpha-D-ribose 1-diphosphate-binding positions include G79, 82–83, T87, 89–92, 106–114, and S118; these read GD, NVST, and KHGNRAASS. Residue G79 coordinates anthranilate. S91 is a binding site for Mg(2+). N109 is an anthranilate binding site. R164 serves as a coordination point for anthranilate. Mg(2+) contacts are provided by D223 and E224.

This sequence belongs to the anthranilate phosphoribosyltransferase family. In terms of assembly, homodimer. Mg(2+) serves as cofactor.

It carries out the reaction N-(5-phospho-beta-D-ribosyl)anthranilate + diphosphate = 5-phospho-alpha-D-ribose 1-diphosphate + anthranilate. It participates in amino-acid biosynthesis; L-tryptophan biosynthesis; L-tryptophan from chorismate: step 2/5. Its function is as follows. Catalyzes the transfer of the phosphoribosyl group of 5-phosphorylribose-1-pyrophosphate (PRPP) to anthranilate to yield N-(5'-phosphoribosyl)-anthranilate (PRA). This chain is Anthranilate phosphoribosyltransferase, found in Metallosphaera sedula (strain ATCC 51363 / DSM 5348 / JCM 9185 / NBRC 15509 / TH2).